The primary structure comprises 177 residues: Transcription antitermination protein NusB (177 aa).

Positions Met1–Ser36 are disordered.

Belongs to the NusB family.

In terms of biological role, involved in transcription antitermination. Required for transcription of ribosomal RNA (rRNA) genes. Binds specifically to the boxA antiterminator sequence of the ribosomal RNA (rrn) operons. The chain is Transcription antitermination protein NusB from Albidiferax ferrireducens (strain ATCC BAA-621 / DSM 15236 / T118) (Rhodoferax ferrireducens).